Here is a 333-residue protein sequence, read N- to C-terminus: uncharacterized protein (333 aa).

Positions 234-333 (PPLAPTSAPA…GLSSEFDSDD (100 aa)) are disordered. Residues 251–265 (VPPPVPAPPTPPPQE) are compositionally biased toward pro residues. A compositionally biased stretch (polar residues) spans 324 to 333 (GLSSEFDSDD).

It is found in the cell projection. The protein localises to the cilium. The protein resides in the flagellum. This is an uncharacterized protein from Homo sapiens (Human).